Reading from the N-terminus, the 288-residue chain is ATP synthase gamma chain (288 aa).

It belongs to the ATPase gamma chain family. In terms of assembly, F-type ATPases have 2 components, CF(1) - the catalytic core - and CF(0) - the membrane proton channel. CF(1) has five subunits: alpha(3), beta(3), gamma(1), delta(1), epsilon(1). CF(0) has three main subunits: a, b and c.

The protein localises to the cell inner membrane. Its function is as follows. Produces ATP from ADP in the presence of a proton gradient across the membrane. The gamma chain is believed to be important in regulating ATPase activity and the flow of protons through the CF(0) complex. The sequence is that of ATP synthase gamma chain from Vibrio vulnificus (strain CMCP6).